A 564-amino-acid polypeptide reads, in one-letter code: Keratin, type II cytoskeletal 6B (564 aa).

Over residues 1–11 (MASTSTTIRSH) the composition is skewed to low complexity. Positions 1–23 (MASTSTTIRSHSSSRRGFSANSA) are disordered. The residue at position 2 (Ala-2) is an N-acetylalanine. Positions 2 to 162 (ASTSTTIRSH…DPAIQRVRAE (161 aa)) are head. The segment at 163–198 (EREQIKTLNNKFASFIDKVRFLEQQNKVLDTKWTLL) is coil 1A. Residues 163-476 (EREQIKTLNN…KLLEGEECRL (314 aa)) form the IF rod domain. The linker 1 stretch occupies residues 199–217 (QEQGTKTVRQNLEPLFEQY). Residues 218–309 (INNLRRQLDN…ALYDAELSQM (92 aa)) form a coil 1B region. The segment at 310 to 333 (QTHISDTSVVLSMDNNRNLDLDSI) is linker 12. The tract at residues 334–472 (IAEVKAQYEE…ATYRKLLEGE (139 aa)) is coil 2. Residues 473–564 (ECRLNGEGVG…SSSSRKSYKH (92 aa)) are tail. Positions 533–564 (RATGGGLSSVGGGSSTIKYTTTSSSSRKSYKH) are disordered. The segment covering 534-546 (ATGGGLSSVGGGS) has biased composition (gly residues). Low complexity predominate over residues 547–564 (STIKYTTTSSSSRKSYKH).

It belongs to the intermediate filament family. In terms of assembly, heterodimer of a type I and a type II keratin. KRT6 isomers associate with KRT16 and/or KRT17. As to expression, constitutively expressed in distinct types of epithelia such as those in oral mucosa, esophagus, papillae of tongue and hair follicle outer root sheath.

The chain is Keratin, type II cytoskeletal 6B (KRT6B) from Homo sapiens (Human).